A 163-amino-acid chain; its full sequence is Type-1 angiotensin II receptor-associated protein-like (163 aa).

At 1–28 the chain is on the extracellular side; sequence MELPAVNLKAIVFTHWLLTVFACMIDWL. A helical membrane pass occupies residues 29–49; sequence PKAYGLANITILAMGVWAIAQ. The Cytoplasmic segment spans residues 50-55; that stretch reads RDSIDA. Residues 56 to 76 form a helical membrane-spanning segment; that stretch reads IFMFLIGLLLTILTDILLFAL. Residues 77–95 are Extracellular-facing; the sequence is YFTEAEKASESGPLRDLFR. Residues 96 to 116 traverse the membrane as a helical segment; sequence FSSGMGIFSLLLKPLSCFFMY. Over 117–163 the chain is Cytoplasmic; the sequence is HMYRERGGEYFVNLGFITLSRDRSSYQSIEHMDPPADQDNKLPSRTY.

It is found in the membrane. Appears to be a negative regulator of angiotensin II type I receptor-mediated signaling. This Xenopus tropicalis (Western clawed frog) protein is Type-1 angiotensin II receptor-associated protein-like (agtrap).